We begin with the raw amino-acid sequence, 395 residues long: NAD(P)H-quinone oxidoreductase subunit H (395 aa).

The protein belongs to the complex I 49 kDa subunit family. In terms of assembly, NDH-1 can be composed of about 15 different subunits; different subcomplexes with different compositions have been identified which probably have different functions.

Its subcellular location is the cellular thylakoid membrane. It carries out the reaction a plastoquinone + NADH + (n+1) H(+)(in) = a plastoquinol + NAD(+) + n H(+)(out). It catalyses the reaction a plastoquinone + NADPH + (n+1) H(+)(in) = a plastoquinol + NADP(+) + n H(+)(out). Its function is as follows. NDH-1 shuttles electrons from an unknown electron donor, via FMN and iron-sulfur (Fe-S) centers, to quinones in the respiratory and/or the photosynthetic chain. The immediate electron acceptor for the enzyme in this species is believed to be plastoquinone. Couples the redox reaction to proton translocation, and thus conserves the redox energy in a proton gradient. Cyanobacterial NDH-1 also plays a role in inorganic carbon-concentration. The sequence is that of NAD(P)H-quinone oxidoreductase subunit H from Prochlorococcus marinus (strain MIT 9312).